We begin with the raw amino-acid sequence, 492 residues long: Dipeptide permease D (492 aa).

Transmembrane regions (helical) follow at residues 14–34 (VVAL…LLIL), 49–69 (ALFS…GYLA), 91–111 (LVLG…AIIV), 138–158 (GGFS…PIAC), 167–187 (WAMG…IFLC), 212–232 (NWGW…VLFW), 236–256 (SVYA…RIYL), 269–289 (LIVV…QGGS), 312–332 (MFQS…AWLV), 344–364 (IWGK…ILTL), 379–399 (LMVL…PVAM), 413–433 (VLTG…AGVI), and 458–478 (VFSQ…VIWL).

The protein belongs to the major facilitator superfamily. Proton-dependent oligopeptide transporter (POT/PTR) (TC 2.A.17) family. DtpD subfamily.

Its subcellular location is the cell inner membrane. Probable proton-dependent permease that transports dipeptides. This is Dipeptide permease D from Klebsiella pneumoniae subsp. pneumoniae (strain ATCC 700721 / MGH 78578).